Here is a 117-residue protein sequence, read N- to C-terminus: SGSCTLRTCWKKMPHFREVGDRLLERFNGASKVMGGNDGKTLIPVGQNIKPPDKQDLIYSDESPDFCLANRKTGSLGTRGRMCNSTAMDISGCDLLCCERGYREESVVFEENCLCRF.

A lipid anchor (O-palmitoleoyl serine; by PORCN) is attached at serine 1. A disulfide bond links cysteine 83 and cysteine 98. The N-linked (GlcNAc...) asparagine glycan is linked to asparagine 84.

The protein belongs to the Wnt family. Post-translationally, palmitoleoylation is required for efficient binding to frizzled receptors. Depalmitoleoylation leads to Wnt signaling pathway inhibition.

The protein resides in the secreted. It localises to the extracellular space. The protein localises to the extracellular matrix. Functionally, ligand for members of the frizzled family of seven transmembrane receptors. Probable developmental protein. May be a signaling molecule which affects the development of discrete regions of tissues. Is likely to signal over only few cell diameters. This Thunnus thynnus (Atlantic bluefin tuna) protein is Protein Wnt-6 (wnt6).